The sequence spans 528 residues: GMP synthase [glutamine-hydrolyzing] (528 aa).

In terms of domain architecture, Glutamine amidotransferase type-1 spans 13 to 204 (SILILDFGSQ…VYSIAKCKAD (192 aa)). The Nucleophile role is filled by Cys-90. Residues His-178 and Glu-180 contribute to the active site. The GMPS ATP-PPase domain maps to 205-403 (WTTETFLEET…LGLPDEIIKR (199 aa)). 232–238 (SGGVDSS) lines the ATP pocket.

Homodimer.

It carries out the reaction XMP + L-glutamine + ATP + H2O = GMP + L-glutamate + AMP + diphosphate + 2 H(+). It participates in purine metabolism; GMP biosynthesis; GMP from XMP (L-Gln route): step 1/1. Its function is as follows. Catalyzes the synthesis of GMP from XMP. The chain is GMP synthase [glutamine-hydrolyzing] from Prochlorococcus marinus subsp. pastoris (strain CCMP1986 / NIES-2087 / MED4).